A 1370-amino-acid chain; its full sequence is Histidine kinase P4 (1370 aa).

The first 20 residues, 1-20 (MRNIGVFSVILFSFLAISLK), serve as a signal peptide directing secretion. The chain crosses the membrane as a helical span at residues 799–819 (WAFCLYALCIGTALIALISFL). A Histidine kinase domain is found at 852–1072 (NISHEFRTPL…IFRVSLPLGR (221 aa)). Position 855 is a phosphohistidine; by autocatalysis (His855). The 116-residue stretch at 1119-1234 (TILIVEDHKP…EFRLRIKNIL (116 aa)) folds into the Response regulatory domain. A 4-aspartylphosphate modification is found at Asp1167. The HTH araC/xylS-type domain occupies 1266 to 1365 (KKAFKIVEDN…NETPSQYQNR (100 aa)). DNA-binding regions (H-T-H motif) lie at residues 1284-1305 (LAFSQELGVSRTTLFNKIKAWT) and 1332-1355 (ISQISYQVGFKSPKYFSKCFQKKF).

Autophosphorylated. Activation requires a sequential transfer of a phosphate group from a His in the primary transmitter domain, to an Asp in the receiver domain and to a His in the secondary transmitter domain.

It localises to the membrane. The protein resides in the cell surface. The enzyme catalyses ATP + protein L-histidine = ADP + protein N-phospho-L-histidine.. Its function is as follows. Histidine kinase probably involved in ulvan degradation. Ulvan is the main polysaccharide component of the Ulvales (green seaweed) cell wall. It is composed of disaccharide building blocks comprising 3-sulfated rhamnose (Rha3S) linked to D-glucuronic acid (GlcA), L-iduronic acid (IduA), or D-xylose (Xyl). The protein is Histidine kinase P4 of Formosa agariphila (strain DSM 15362 / KCTC 12365 / LMG 23005 / KMM 3901 / M-2Alg 35-1).